Consider the following 158-residue polypeptide: NAD(P)H-quinone oxidoreductase subunit J, chloroplastic (158 aa).

It belongs to the complex I 30 kDa subunit family. NDH is composed of at least 16 different subunits, 5 of which are encoded in the nucleus.

Its subcellular location is the plastid. The protein localises to the chloroplast thylakoid membrane. The enzyme catalyses a plastoquinone + NADH + (n+1) H(+)(in) = a plastoquinol + NAD(+) + n H(+)(out). It catalyses the reaction a plastoquinone + NADPH + (n+1) H(+)(in) = a plastoquinol + NADP(+) + n H(+)(out). Functionally, NDH shuttles electrons from NAD(P)H:plastoquinone, via FMN and iron-sulfur (Fe-S) centers, to quinones in the photosynthetic chain and possibly in a chloroplast respiratory chain. The immediate electron acceptor for the enzyme in this species is believed to be plastoquinone. Couples the redox reaction to proton translocation, and thus conserves the redox energy in a proton gradient. This Ceratophyllum demersum (Rigid hornwort) protein is NAD(P)H-quinone oxidoreductase subunit J, chloroplastic.